Here is a 203-residue protein sequence, read N- to C-terminus: Ribosome maturation factor RimP (203 aa).

Positions Val179–Lys203 are disordered.

Belongs to the RimP family.

The protein resides in the cytoplasm. Functionally, required for maturation of 30S ribosomal subunits. This chain is Ribosome maturation factor RimP, found in Gluconobacter oxydans (strain 621H) (Gluconobacter suboxydans).